The sequence spans 175 residues: Ribulose bisphosphate carboxylase small subunit, chloroplastic 2 (175 aa).

The transit peptide at 1 to 46 (MAPTVMASSATSVAPFQGLKSTAGLPVSRRSTNSGFGNVSNGGRIK) directs the protein to the chloroplast.

Belongs to the RuBisCO small chain family. As to quaternary structure, heterohexadecamer of 8 large and 8 small subunits.

It is found in the plastid. It localises to the chloroplast. Functionally, ruBisCO catalyzes two reactions: the carboxylation of D-ribulose 1,5-bisphosphate, the primary event in carbon dioxide fixation, as well as the oxidative fragmentation of the pentose substrate. Both reactions occur simultaneously and in competition at the same active site. Although the small subunit is not catalytic it is essential for maximal activity. This chain is Ribulose bisphosphate carboxylase small subunit, chloroplastic 2, found in Oryza sativa subsp. japonica (Rice).